Reading from the N-terminus, the 78-residue chain is Omega-conotoxin PnVIA (78 aa).

Residues 1-22 (MKLTCMMIIAVLFLTAWTFVMA) form the signal peptide. Residues 23-45 (DDPRDEPEARDEMNPAASKLNER) constitute a propeptide that is removed on maturation. 3 disulfides stabilise this stretch: Cys-47–Cys-65, Cys-54–Cys-69, and Cys-64–Cys-73. Gln-76 is modified (glutamine amide).

In terms of tissue distribution, expressed by the venom duct.

It localises to the secreted. In terms of biological role, omega-conotoxins act at presynaptic membranes, they bind and block voltage-gated calcium channels (Cav). Acts on high voltage-activated (HVA) calcium currents in molluscan neurons. This chain is Omega-conotoxin PnVIA, found in Conus pennaceus (Feathered cone).